The sequence spans 345 residues: Heat-inducible transcription repressor HrcA (345 aa).

It belongs to the HrcA family.

In terms of biological role, negative regulator of class I heat shock genes (grpE-dnaK-dnaJ and groELS operons). Prevents heat-shock induction of these operons. The chain is Heat-inducible transcription repressor HrcA from Dehalococcoides mccartyi (strain ATCC BAA-2266 / KCTC 15142 / 195) (Dehalococcoides ethenogenes (strain 195)).